The primary structure comprises 351 residues: UDP-N-acetylenolpyruvoylglucosamine reductase (351 aa).

Residues 11–213 (GVGGSIACFI…KQVRDQVLRI (203 aa)) enclose the FAD-binding PCMH-type domain. The active site involves Arg158. Ser239 acts as the Proton donor in catalysis. The active site involves Glu343.

Belongs to the MurB family. Requires FAD as cofactor.

The protein localises to the cytoplasm. The catalysed reaction is UDP-N-acetyl-alpha-D-muramate + NADP(+) = UDP-N-acetyl-3-O-(1-carboxyvinyl)-alpha-D-glucosamine + NADPH + H(+). It participates in cell wall biogenesis; peptidoglycan biosynthesis. Functionally, cell wall formation. The polypeptide is UDP-N-acetylenolpyruvoylglucosamine reductase (Tropheryma whipplei (strain Twist) (Whipple's bacillus)).